The sequence spans 490 residues: Angiopoietin-related protein 1 (490 aa).

The signal sequence occupies residues 1–22 (MKAFVWTLSVLLFLLGSGHCKG). Positions 79–167 (ITRMDLENLK…LNVTTEMLKM (89 aa)) form a coiled coil. Residues Asn-159 and Asn-187 are each glycosylated (N-linked (GlcNAc...) asparagine). One can recognise a Fibrinogen C-terminal domain in the interval 270–490 (FINEGPFKDC…AVQMMIKPID (221 aa)). 2 disulfide bridges follow: Cys-279-Cys-308 and Cys-431-Cys-444.

The protein localises to the secreted. The polypeptide is Angiopoietin-related protein 1 (Angptl1) (Mus musculus (Mouse)).